A 102-amino-acid chain; its full sequence is Transcription factor UPBEAT1 (102 aa).

The region spanning 32–82 is the bHLH domain; it reads IRPRKSVEASRRPCRAIHRRVKTLKELVPNTKTSEGLDGLFRQTADYILAL.

In terms of assembly, homodimer. Expressed in the root vascular tissue and in root hairs and lateral root caps. Detected at the protein level in all cell files in the elongation zone.

It is found in the nucleus. Transcription factor that modulates the balance between cellular proliferation and differentiation in root growth. Does not act through cytokinin and auxin signaling, but by repressing peroxidase expression in the elongation zone. The polypeptide is Transcription factor UPBEAT1 (UPB1) (Arabidopsis thaliana (Mouse-ear cress)).